Reading from the N-terminus, the 20-residue chain is GSSFCDSKCAVRCSKAGVQD.

This sequence belongs to the GASA family. In terms of tissue distribution, expressed in pulp (aril) of fruits (at protein level).

This Punica granatum (Pomegranate) protein is Pommaclein.